The sequence spans 412 residues: Dihydrolipoyllysine-residue acetyltransferase component of pyruvate dehydrogenase complex (412 aa).

Residues 2–78 form the Lipoyl-binding domain; that stretch reads PIKILMPVLS…PVNSLIAVLS (77 aa). K43 carries the post-translational modification N6-lipoyllysine. The Peripheral subunit-binding (PSBD) domain maps to 132–169; sequence FASPLAKRLAKMGNIRLESVKGSGPHGRIVKQDILSYT. The active site involves H385.

The protein belongs to the 2-oxoacid dehydrogenase family. In terms of assembly, forms a 24-polypeptide structural core with octahedral symmetry. Requires (R)-lipoate as cofactor.

The enzyme catalyses N(6)-[(R)-dihydrolipoyl]-L-lysyl-[protein] + acetyl-CoA = N(6)-[(R)-S(8)-acetyldihydrolipoyl]-L-lysyl-[protein] + CoA. In terms of biological role, the pyruvate dehydrogenase complex catalyzes the overall conversion of pyruvate to acetyl-CoA and CO(2). It contains multiple copies of three enzymatic components: pyruvate dehydrogenase (E1), dihydrolipoamide acetyltransferase (E2) and lipoamide dehydrogenase (E3). The protein is Dihydrolipoyllysine-residue acetyltransferase component of pyruvate dehydrogenase complex (pdhC) of Rickettsia felis (strain ATCC VR-1525 / URRWXCal2) (Rickettsia azadi).